Consider the following 477-residue polypeptide: P3 protein (477 aa).

The segment at 1–21 is disordered; the sequence is MVFRSGEGHSLQWPGPEGGTG. Transmembrane regions (helical) follow at residues 225-245, 253-273, 281-301, 320-340, 361-381, 383-403, 417-437, and 450-470; these read PMLLGLLGQFLVMPFYAFLMA, ALALGLIITCSSPGGGGSYLF, VTLAISMTFISTVAATGFLPL, VSKILGTLLFIAIPIAAGVVI, VLLLGGLFLAYRMGVFILAGV, LPIVLVGFTVPLVGLLVGYGL, VSIEVGVQNSLLALAMLQLSL, and FLVALSGTSEMLALVIGHFIY.

This sequence belongs to the bile acid:sodium symporter (BASS) (TC 2.A.28) family.

It is found in the membrane. In terms of biological role, the ubiquitous expression and the conservation of the sequence in distant animal species suggest that the gene codes for a protein with housekeeping functions. The polypeptide is P3 protein (SLC10A3) (Bos taurus (Bovine)).